The chain runs to 494 residues: Lysine--tRNA ligase (494 aa).

Glutamate 399 and glutamate 406 together coordinate Mg(2+).

This sequence belongs to the class-II aminoacyl-tRNA synthetase family. Mg(2+) is required as a cofactor.

It is found in the cytoplasm. The enzyme catalyses tRNA(Lys) + L-lysine + ATP = L-lysyl-tRNA(Lys) + AMP + diphosphate. The protein is Lysine--tRNA ligase (lysS) of Saccharolobus solfataricus (strain ATCC 35092 / DSM 1617 / JCM 11322 / P2) (Sulfolobus solfataricus).